A 73-amino-acid chain; its full sequence is Long neurotoxin 2 (73 aa).

5 disulfides stabilise this stretch: C3–C21, C14–C42, C27–C31, C46–C57, and C58–C63.

This sequence belongs to the three-finger toxin family. Long-chain subfamily. Type II alpha-neurotoxin sub-subfamily. Expressed by the venom gland.

The protein resides in the secreted. Binds with high affinity to muscular (alpha-1/CHRNA1) and neuronal (alpha-7/CHRNA7) nicotinic acetylcholine receptor (nAChR) and inhibits acetylcholine from binding to the receptor, thereby impairing neuromuscular and neuronal transmission. The protein is Long neurotoxin 2 of Ophiophagus hannah (King cobra).